Here is a 311-residue protein sequence, read N- to C-terminus: Ribosomal RNA small subunit methyltransferase A (311 aa).

The S-adenosyl-L-methionine site is built by N29, V31, G56, E77, D107, and N126.

This sequence belongs to the class I-like SAM-binding methyltransferase superfamily. rRNA adenine N(6)-methyltransferase family. RsmA subfamily.

It is found in the cytoplasm. It catalyses the reaction adenosine(1518)/adenosine(1519) in 16S rRNA + 4 S-adenosyl-L-methionine = N(6)-dimethyladenosine(1518)/N(6)-dimethyladenosine(1519) in 16S rRNA + 4 S-adenosyl-L-homocysteine + 4 H(+). In terms of biological role, specifically dimethylates two adjacent adenosines (A1518 and A1519) in the loop of a conserved hairpin near the 3'-end of 16S rRNA in the 30S particle. May play a critical role in biogenesis of 30S subunits. The protein is Ribosomal RNA small subunit methyltransferase A of Mycolicibacterium vanbaalenii (strain DSM 7251 / JCM 13017 / BCRC 16820 / KCTC 9966 / NRRL B-24157 / PYR-1) (Mycobacterium vanbaalenii).